Here is a 764-residue protein sequence, read N- to C-terminus: 5-methyltetrahydropteroyltriglutamate--homocysteine methyltransferase (764 aa).

Residues 16-19 (RELK) and lysine 112 contribute to the 5-methyltetrahydropteroyltri-L-glutamate site. L-homocysteine is bound by residues 431–433 (IGS) and glutamate 484. L-methionine-binding positions include 431–433 (IGS) and glutamate 484. Residues 515–516 (RC) and tryptophan 561 each bind 5-methyltetrahydropteroyltri-L-glutamate. L-homocysteine is bound at residue aspartate 599. Aspartate 599 contributes to the L-methionine binding site. Glutamate 605 lines the 5-methyltetrahydropteroyltri-L-glutamate pocket. Positions 641, 643, and 665 each coordinate Zn(2+). Histidine 694 functions as the Proton donor in the catalytic mechanism. Cysteine 726 is a Zn(2+) binding site.

The protein belongs to the vitamin-B12 independent methionine synthase family. The cofactor is Zn(2+).

It catalyses the reaction 5-methyltetrahydropteroyltri-L-glutamate + L-homocysteine = tetrahydropteroyltri-L-glutamate + L-methionine. It functions in the pathway amino-acid biosynthesis; L-methionine biosynthesis via de novo pathway; L-methionine from L-homocysteine (MetE route): step 1/1. Functionally, catalyzes the transfer of a methyl group from 5-methyltetrahydrofolate to homocysteine resulting in methionine formation. The polypeptide is 5-methyltetrahydropteroyltriglutamate--homocysteine methyltransferase (Paraburkholderia phytofirmans (strain DSM 17436 / LMG 22146 / PsJN) (Burkholderia phytofirmans)).